The following is a 240-amino-acid chain: Ribonuclease T2 (240 aa).

The signal sequence occupies residues 1 to 19 (MRFIAFAVIFSAVYLCSSA). The cysteines at positions 41 and 46 are disulfide-linked. His56 is a catalytic residue. Cystine bridges form between Cys66/Cys110, Cys173/Cys227, and Cys191/Cys201. Asn67 and Asn73 each carry an N-linked (GlcNAc...) asparagine glycan. Active-site residues include Glu103 and His107.

This sequence belongs to the RNase T2 family. Ubiquitous.

Its subcellular location is the lysosome lumen. It localises to the endoplasmic reticulum lumen. It is found in the secreted. The enzyme catalyses a ribonucleotidyl-ribonucleotide-RNA + H2O = a 3'-end 3'-phospho-ribonucleotide-RNA + a 5'-end dephospho-ribonucleoside-RNA + H(+). Has ribonuclease activity, with higher activity at acidic pH. Probably is involved in lysosomal degradation of ribosomal RNA. The polypeptide is Ribonuclease T2 (rnaset2) (Danio rerio (Zebrafish)).